Consider the following 306-residue polypeptide: Putative S-adenosyl-L-methionine-dependent methyltransferase Mvan_1345 (306 aa).

S-adenosyl-L-methionine-binding positions include D134 and 163–164 (DL).

Belongs to the UPF0677 family.

Its function is as follows. Exhibits S-adenosyl-L-methionine-dependent methyltransferase activity. This chain is Putative S-adenosyl-L-methionine-dependent methyltransferase Mvan_1345, found in Mycolicibacterium vanbaalenii (strain DSM 7251 / JCM 13017 / BCRC 16820 / KCTC 9966 / NRRL B-24157 / PYR-1) (Mycobacterium vanbaalenii).